A 219-amino-acid polypeptide reads, in one-letter code: MTQDELKKAVGWAALQYVQPGTIVGVGTGSTAAHFIDALGTMKGQIEGAVSSSDASTEKLKSLGITVFDLNEVDRLGIYVDGADEINGHMQMIKGGGAALTREKIIASVADKFICIADASKQVDILGNFPLPVEVIPMARSAVARQLVKLGGRPEYRQGVVTDNGNVILDVHGLEILDAIALENAINAIPGVVTVGLFANRGADVALIGTADGVKTIVK.

Residues 28 to 31 (TGST), 81 to 84 (DGAD), and 94 to 97 (KGGG) contribute to the substrate site. E103 functions as the Proton acceptor in the catalytic mechanism. K121 is a binding site for substrate.

This sequence belongs to the ribose 5-phosphate isomerase family. As to quaternary structure, homodimer.

The catalysed reaction is aldehydo-D-ribose 5-phosphate = D-ribulose 5-phosphate. It functions in the pathway carbohydrate degradation; pentose phosphate pathway; D-ribose 5-phosphate from D-ribulose 5-phosphate (non-oxidative stage): step 1/1. Catalyzes the reversible conversion of ribose-5-phosphate to ribulose 5-phosphate. This Enterobacter cloacae protein is Ribose-5-phosphate isomerase A.